Consider the following 298-residue polypeptide: tRNA dimethylallyltransferase (298 aa).

16-23 is a binding site for ATP; the sequence is GPTASGKS. 18–23 contributes to the substrate binding site; the sequence is TASGKS. Interaction with substrate tRNA stretches follow at residues 41-44 and 165-169; these read DSMQ and QRIVR.

This sequence belongs to the IPP transferase family. Monomer. The cofactor is Mg(2+).

The catalysed reaction is adenosine(37) in tRNA + dimethylallyl diphosphate = N(6)-dimethylallyladenosine(37) in tRNA + diphosphate. Catalyzes the transfer of a dimethylallyl group onto the adenine at position 37 in tRNAs that read codons beginning with uridine, leading to the formation of N6-(dimethylallyl)adenosine (i(6)A). In Rhizobium rhizogenes (strain K84 / ATCC BAA-868) (Agrobacterium radiobacter), this protein is tRNA dimethylallyltransferase.